The sequence spans 170 residues: Histone H1.9 (170 aa).

Positions 34 to 108 (RKPTMSYVIL…GASGSLCLCK (75 aa)) constitute an H15 domain. The residue at position 56 (S56) is a Phosphoserine. Residues 118–140 (AKRCQDRQKSQKPQKPGQRESEP) form a disordered region.

It belongs to the histone H1/H5 family. Expressed exclusively in the testis by haploid germ cells (at protein level).

The protein localises to the nucleus. Its subcellular location is the chromosome. In terms of biological role, DNA-binding protein that may be implicated in chromatin remodeling and/or transcriptional regulation during spermiogenesis, the process of spermatid maturation into spermatozoa. In Mus musculus (Mouse), this protein is Histone H1.9.